Here is a 373-residue protein sequence, read N- to C-terminus: Probable tRNA sulfurtransferase (373 aa).

The THUMP domain occupies 54 to 158 (NKNIEELSKV…NDVAYFYYKI (105 aa)). Residues 176–177 (LF), 201–202 (NF), Lys-256, Gly-278, and Gln-287 contribute to the ATP site.

This sequence belongs to the ThiI family.

The protein resides in the cytoplasm. The enzyme catalyses [ThiI sulfur-carrier protein]-S-sulfanyl-L-cysteine + a uridine in tRNA + 2 reduced [2Fe-2S]-[ferredoxin] + ATP + H(+) = [ThiI sulfur-carrier protein]-L-cysteine + a 4-thiouridine in tRNA + 2 oxidized [2Fe-2S]-[ferredoxin] + AMP + diphosphate. It carries out the reaction [ThiS sulfur-carrier protein]-C-terminal Gly-Gly-AMP + S-sulfanyl-L-cysteinyl-[cysteine desulfurase] + AH2 = [ThiS sulfur-carrier protein]-C-terminal-Gly-aminoethanethioate + L-cysteinyl-[cysteine desulfurase] + A + AMP + 2 H(+). Its pathway is cofactor biosynthesis; thiamine diphosphate biosynthesis. Catalyzes the ATP-dependent transfer of a sulfur to tRNA to produce 4-thiouridine in position 8 of tRNAs, which functions as a near-UV photosensor. Also catalyzes the transfer of sulfur to the sulfur carrier protein ThiS, forming ThiS-thiocarboxylate. This is a step in the synthesis of thiazole, in the thiamine biosynthesis pathway. The sulfur is donated as persulfide by IscS. The sequence is that of Probable tRNA sulfurtransferase from Saccharolobus islandicus (strain L.S.2.15 / Lassen #1) (Sulfolobus islandicus).